Reading from the N-terminus, the 358-residue chain is Stearoyl-CoA desaturase 2 (358 aa).

At 1 to 71 (MPAHILQEIS…EGPPPKLEYV (71 aa)) the chain is on the cytoplasmic side. Residues 16 to 39 (TTTITAPPSGGQQNGGEKFEKSSH) form a disordered region. A helical membrane pass occupies residues 72 to 92 (WRNIILMALLHLGALYGITLV). N74 contributes to the substrate binding site. The Lumenal portion of the chain corresponds to 93–96 (PSCK). The helical transmembrane segment at 97-117 (LYTCLFAYLYYVISALGITAG) threads the bilayer. The Cytoplasmic portion of the chain corresponds to 118–216 (AHRLWSHRTY…EKLVMFQRRY (99 aa)). Positions 119 and 124 each coordinate Fe cation. Residues 119-124 (HRLWSH) carry the Histidine box-1 motif. The substrate site is built by N147, R154, and D155. The Fe cation site is built by H156, H159, and H160. The Histidine box-2 motif lies at 156 to 160 (HRAHH). Positions 187 and 188 each coordinate substrate. The chain crosses the membrane as a helical span at residues 217-236 (YKPGLLLMCFVLPTLVPWYC). The Lumenal segment spans residues 237–240 (WGET). Residues 241–262 (FVNSLCVSTFLRYAVVLNATWL) traverse the membrane as a helical segment. W261 contacts substrate. Over 263-358 (VNSAAHLYGY…RTGDGSCKSG (96 aa)) the chain is Cytoplasmic. Fe cation contacts are provided by H268, H297, H300, and H301. The short motif at 297–301 (HNYHH) is the Histidine box-3 element.

It belongs to the fatty acid desaturase type 1 family. Requires Fe(2+) as cofactor. Detected in brain and skin. Highly expressed in brain, and detected at low levels in heart, stomach, lung and testis. Detected both in dermis and epidermis.

It localises to the endoplasmic reticulum membrane. It is found in the microsome membrane. It carries out the reaction octadecanoyl-CoA + 2 Fe(II)-[cytochrome b5] + O2 + 2 H(+) = (9Z)-octadecenoyl-CoA + 2 Fe(III)-[cytochrome b5] + 2 H2O. The catalysed reaction is hexadecanoyl-CoA + 2 Fe(II)-[cytochrome b5] + O2 + 2 H(+) = (9Z)-hexadecenoyl-CoA + 2 Fe(III)-[cytochrome b5] + 2 H2O. Functionally, stearoyl-CoA desaturase that utilizes O(2) and electrons from reduced cytochrome b5 to introduce the first double bond into saturated fatty acyl-CoA substrates. Catalyzes the insertion of a cis double bond at the delta-9 position into fatty acyl-CoA substrates including palmitoyl-CoA and stearoyl-CoA. Gives rise to a mixture of 16:1 and 18:1 unsaturated fatty acids. Contributes to the biosynthesis of membrane phospholipids, cholesterol esters and triglycerides, especially during embryonic development and in neonates. Important for normal permeability barrier function of the skin in neonates. The protein is Stearoyl-CoA desaturase 2 (Scd2) of Mus musculus (Mouse).